The primary structure comprises 137 residues: Large ribosomal subunit protein bL17 (137 aa).

This sequence belongs to the bacterial ribosomal protein bL17 family. As to quaternary structure, part of the 50S ribosomal subunit. Contacts protein L32.

In Caulobacter vibrioides (strain ATCC 19089 / CIP 103742 / CB 15) (Caulobacter crescentus), this protein is Large ribosomal subunit protein bL17.